The primary structure comprises 68 residues: Serine rich endogenous peptide 13 (68 aa).

The signal sequence occupies residues 1–31 (MATKASNLVVFLLSLLLLFLLISFQVGVADA). The interval 33 to 68 (RNKRQGQEQRVDYDYPRPPTAPIYLPPSKSRKGKGP) is disordered. The segment covering 37–47 (QGQEQRVDYDY) has biased composition (basic and acidic residues). The segment covering 48 to 57 (PRPPTAPIYL) has biased composition (pro residues). Residues 54-68 (PIYLPPSKSRKGKGP) carry the SCOOP motif motif. A SxS motif essential for MIK2 binding motif is present at residues 60 to 62 (SKS).

It belongs to the serine rich endogenous peptide (SCOOP) phytocytokine family. In terms of assembly, interacts with MIK2 (via extracellular leucine-rich repeat domain); this interaction triggers the formation of complex between MIK2 and the BAK1/SERK3 and SERK4 coreceptors, and subsequent BAK1 activation by phosphorylation. As to expression, mostly expressed in stems and flowers and, to a lower extent, in seedlings shoots, roots, siliques, seeds and leaves.

Its subcellular location is the cell membrane. It localises to the secreted. The protein localises to the extracellular space. It is found in the apoplast. Brassicaceae-specific phytocytokine (plant endogenous peptide released into the apoplast) perceived by MIK2 in a BAK1/SERK3 and SERK4 coreceptors-dependent manner, that modulates various physiological and antimicrobial processes including growth prevention and reactive oxygen species (ROS) response regulation. Promotes the expression of immune-related marker genes (e.g. WRKY30, WRKY33 and CYP81F2) in a MIK2-dependent manner. Inhibits root growth and regulates root meristems. Prevents general growth and development. Exhibits antibacterial effects against Pseudomonas syringae pv. tomato DC3000, Ralstonia solanacearum, Bacillus subtilis and Agrobacterium tumefaciens, thus being an antimicrobial peptide (AMP). The sequence is that of Serine rich endogenous peptide 13 from Arabidopsis thaliana (Mouse-ear cress).